Reading from the N-terminus, the 105-residue chain is Small ribosomal subunit protein uS10 (105 aa).

It belongs to the universal ribosomal protein uS10 family. In terms of assembly, part of the 30S ribosomal subunit.

In terms of biological role, involved in the binding of tRNA to the ribosomes. In Rickettsia massiliae (strain Mtu5), this protein is Small ribosomal subunit protein uS10.